We begin with the raw amino-acid sequence, 315 residues long: Replication factor C small subunit (315 aa).

43 to 50 (GSPGVGKT) provides a ligand contact to ATP.

The protein belongs to the activator 1 small subunits family. RfcS subfamily. Heteromultimer composed of small subunits (RfcS) and large subunits (RfcL).

Part of the RFC clamp loader complex which loads the PCNA sliding clamp onto DNA. The polypeptide is Replication factor C small subunit (Methanococcus maripaludis (strain DSM 14266 / JCM 13030 / NBRC 101832 / S2 / LL)).